The sequence spans 477 residues: Aspartyl/glutamyl-tRNA(Asn/Gln) amidotransferase subunit B (477 aa).

The protein belongs to the GatB/GatE family. GatB subfamily. Heterotrimer of A, B and C subunits.

The enzyme catalyses L-glutamyl-tRNA(Gln) + L-glutamine + ATP + H2O = L-glutaminyl-tRNA(Gln) + L-glutamate + ADP + phosphate + H(+). The catalysed reaction is L-aspartyl-tRNA(Asn) + L-glutamine + ATP + H2O = L-asparaginyl-tRNA(Asn) + L-glutamate + ADP + phosphate + 2 H(+). In terms of biological role, allows the formation of correctly charged Asn-tRNA(Asn) or Gln-tRNA(Gln) through the transamidation of misacylated Asp-tRNA(Asn) or Glu-tRNA(Gln) in organisms which lack either or both of asparaginyl-tRNA or glutaminyl-tRNA synthetases. The reaction takes place in the presence of glutamine and ATP through an activated phospho-Asp-tRNA(Asn) or phospho-Glu-tRNA(Gln). The protein is Aspartyl/glutamyl-tRNA(Asn/Gln) amidotransferase subunit B of Legionella pneumophila (strain Corby).